Reading from the N-terminus, the 248-residue chain is MSICLIAEEGADSGALSSLAERWGLVSDPNAVMALVLTTERLELRKQDEPKLGAIFVDFVAGPMAHRRRFGGGRGEAVAKAVGIKKDYLPDVVDATAGLGRDAFVLAALGCHVRMVERNPVVAALLDDGLKRGYQDAEIGPWLRERLTLLHASSMTALRDITPPPDVVYLDPMFPHKQKSALVKKEMRVFQSLVGADDDADALLEPARALAKKRVVVKRPDYAPPLAGVPAQSMLETKSHRFDFYLPV.

S-adenosyl-L-methionine contacts are provided by residues 101 to 102 (RD), 117 to 118 (ER), 153 to 154 (SS), and Asp171.

The protein belongs to the methyltransferase superfamily. RsmJ family.

Its subcellular location is the cytoplasm. The catalysed reaction is guanosine(1516) in 16S rRNA + S-adenosyl-L-methionine = N(2)-methylguanosine(1516) in 16S rRNA + S-adenosyl-L-homocysteine + H(+). Its function is as follows. Specifically methylates the guanosine in position 1516 of 16S rRNA. This is Ribosomal RNA small subunit methyltransferase J from Pectobacterium atrosepticum (strain SCRI 1043 / ATCC BAA-672) (Erwinia carotovora subsp. atroseptica).